A 197-amino-acid chain; its full sequence is Putative methyltransferase Mtx subunit A (197 aa).

The protein belongs to the MtrA family. May be part of a complex composed of 3 subunits; MtxA, MtxH and MtxX.

The protein is Putative methyltransferase Mtx subunit A (mtxA) of Methanosarcina acetivorans (strain ATCC 35395 / DSM 2834 / JCM 12185 / C2A).